The primary structure comprises 47 residues: Large ribosomal subunit protein eL40 (47 aa).

It belongs to the eukaryotic ribosomal protein eL40 family.

The protein is Large ribosomal subunit protein eL40 of Methanococcus vannielii (strain ATCC 35089 / DSM 1224 / JCM 13029 / OCM 148 / SB).